We begin with the raw amino-acid sequence, 380 residues long: Erythronate-4-phosphate dehydrogenase (380 aa).

Positions 45 and 66 each coordinate substrate. Residues Asp146, Thr174, 205 to 207 (ASR), and Asp231 each bind NAD(+). The active site involves Arg207. Glu236 is an active-site residue. The Proton donor role is filled by His253. NAD(+) is bound at residue Gly256. Position 257 (Tyr257) interacts with substrate.

It belongs to the D-isomer specific 2-hydroxyacid dehydrogenase family. PdxB subfamily. As to quaternary structure, homodimer.

It is found in the cytoplasm. It catalyses the reaction 4-phospho-D-erythronate + NAD(+) = (R)-3-hydroxy-2-oxo-4-phosphooxybutanoate + NADH + H(+). It functions in the pathway cofactor biosynthesis; pyridoxine 5'-phosphate biosynthesis; pyridoxine 5'-phosphate from D-erythrose 4-phosphate: step 2/5. Functionally, catalyzes the oxidation of erythronate-4-phosphate to 3-hydroxy-2-oxo-4-phosphonooxybutanoate. This chain is Erythronate-4-phosphate dehydrogenase, found in Pseudomonas putida (strain GB-1).